A 120-amino-acid chain; its full sequence is NAD(P)H-quinone oxidoreductase subunit 3, chloroplastic (120 aa).

Transmembrane regions (helical) follow at residues 9–29, 64–84, and 88–108; these read IFWA…LISG, MFAL…PWAM, and VLGV…IVGS.

Belongs to the complex I subunit 3 family. As to quaternary structure, NDH is composed of at least 16 different subunits, 5 of which are encoded in the nucleus.

Its subcellular location is the plastid. The protein localises to the chloroplast thylakoid membrane. The enzyme catalyses a plastoquinone + NADH + (n+1) H(+)(in) = a plastoquinol + NAD(+) + n H(+)(out). It catalyses the reaction a plastoquinone + NADPH + (n+1) H(+)(in) = a plastoquinol + NADP(+) + n H(+)(out). Its function is as follows. NDH shuttles electrons from NAD(P)H:plastoquinone, via FMN and iron-sulfur (Fe-S) centers, to quinones in the photosynthetic chain and possibly in a chloroplast respiratory chain. The immediate electron acceptor for the enzyme in this species is believed to be plastoquinone. Couples the redox reaction to proton translocation, and thus conserves the redox energy in a proton gradient. This is NAD(P)H-quinone oxidoreductase subunit 3, chloroplastic from Acorus calamus var. americanus (American sweet flag).